The chain runs to 295 residues: Spermatogenesis-associated protein 4 (295 aa).

Residues M1–K34 are disordered. Residues S48–Q154 enclose the Calponin-homology (CH) domain. Positions K251–L295 are disordered. The span at S270–V282 shows a compositional bias: basic and acidic residues. The segment covering Q284–L295 has biased composition (polar residues).

As to expression, testis.

It is found in the nucleus. May play a role in apoptosis regulation. This Mus musculus (Mouse) protein is Spermatogenesis-associated protein 4 (Spata4).